A 422-amino-acid chain; its full sequence is Probable cell wall mannoprotein PIR32 (422 aa).

An N-terminal signal peptide occupies residues 1-21 (MIHYLIFPILLIFFQIIKSSG). Disordered stretches follow at residues 116-143 (DGQVQKMKHKHDYSSGGGDDDDDDEDCF) and 155-313 (DYQD…EGYE). Positions 133–143 (GDDDDDDEDCF) are enriched in acidic residues. Positions 158–169 (DMNTQEQANEDS) are enriched in polar residues. Residues 179–214 (HQQVVDQNQQINEEEEETQEQQMQEENNNTNEIEDN) adopt a coiled-coil conformation. 2 stretches are compositionally biased toward low complexity: residues 180–189 (QQVVDQNQQI) and 198–209 (EQQMQEENNNTN). Asn206 carries an N-linked (GlcNAc...) asparagine glycan. The segment covering 220-231 (ETIEEIYDDIDN) has biased composition (acidic residues). Residues Asn232 and Asn237 are each glycosylated (N-linked (GlcNAc...) asparagine). A compositionally biased stretch (basic residues) spans 238 to 248 (NSKKYHKKRPH). Basic and acidic residues-rich tracts occupy residues 249–284 (NNYENKHGHKDYHEDHHHNHRYKDHENGHEEDDHKW) and 300–311 (QEQKPKHEKSEG). Asn328 carries N-linked (GlcNAc...) asparagine glycosylation.

This sequence belongs to the PIR protein family. Post-translationally, O-glycosylated. Extensively O-mannosylated.

The protein resides in the secreted. Its subcellular location is the cell wall. In terms of biological role, probable structural component of the cell wall involved in cell wall integrity and virulence. This Candida albicans (strain SC5314 / ATCC MYA-2876) (Yeast) protein is Probable cell wall mannoprotein PIR32 (PIR32).